Consider the following 545-residue polypeptide: Adenine deaminase (545 aa).

Belongs to the metallo-dependent hydrolases superfamily. Adenine deaminase family. Mn(2+) is required as a cofactor.

The enzyme catalyses adenine + H2O + H(+) = hypoxanthine + NH4(+). The protein is Adenine deaminase of Salinibacter ruber (strain DSM 13855 / M31).